The following is a 411-amino-acid chain: Na(+)-translocating NADH-quinone reductase subunit B (411 aa).

3 helical membrane-spanning segments follow: residues 56–76, 121–141, and 161–181; these read IMIT…YNAG, FLPI…LFAV, and ILPA…GVVI. The residue at position 228 (T228) is an FMN phosphoryl threonine. Helical transmembrane passes span 254 to 274, 284 to 304, 309 to 329, 345 to 365, and 368 to 388; these read FIPG…AAVL, IMLG…AIGS, MFGM…GMVF, LLFG…NPAF, and GIML…HFFV.

This sequence belongs to the NqrB/RnfD family. Composed of six subunits; NqrA, NqrB, NqrC, NqrD, NqrE and NqrF. The cofactor is FMN.

Its subcellular location is the cell inner membrane. It carries out the reaction a ubiquinone + n Na(+)(in) + NADH + H(+) = a ubiquinol + n Na(+)(out) + NAD(+). Its function is as follows. NQR complex catalyzes the reduction of ubiquinone-1 to ubiquinol by two successive reactions, coupled with the transport of Na(+) ions from the cytoplasm to the periplasm. NqrA to NqrE are probably involved in the second step, the conversion of ubisemiquinone to ubiquinol. The protein is Na(+)-translocating NADH-quinone reductase subunit B of Chromohalobacter salexigens (strain ATCC BAA-138 / DSM 3043 / CIP 106854 / NCIMB 13768 / 1H11).